A 316-amino-acid polypeptide reads, in one-letter code: Mitochondrial distribution and morphology protein 12 (316 aa).

An SMP-LTD domain is found at 1 to 312 (MSIDLEWNGL…FPNFHTLVLG (312 aa)).

The protein belongs to the MDM12 family. In terms of assembly, component of the ER-mitochondria encounter structure (ERMES) or MDM complex, composed of MMM1, MDM10, MDM12 and MDM34. An MMM1 homodimer associates with one molecule of MDM12 on each side in a pairwise head-to-tail manner, and the SMP-LTD domains of MMM1 and MDM12 generate a continuous hydrophobic tunnel for phospholipid trafficking.

The protein localises to the mitochondrion outer membrane. The protein resides in the endoplasmic reticulum membrane. Component of the ERMES/MDM complex, which serves as a molecular tether to connect the endoplasmic reticulum (ER) and mitochondria. Components of this complex are involved in the control of mitochondrial shape and protein biogenesis, and function in nonvesicular lipid trafficking between the ER and mitochondria. MDM12 is required for the interaction of the ER-resident membrane protein MMM1 and the outer mitochondrial membrane-resident beta-barrel protein MDM10. The MDM12-MMM1 subcomplex functions in the major beta-barrel assembly pathway that is responsible for biogenesis of all mitochondrial outer membrane beta-barrel proteins, and acts in a late step after the SAM complex. The MDM10-MDM12-MMM1 subcomplex further acts in the TOM40-specific pathway after the action of the MDM12-MMM1 complex. Essential for establishing and maintaining the structure of mitochondria and maintenance of mtDNA nucleoids. This is Mitochondrial distribution and morphology protein 12 from Postia placenta (strain ATCC 44394 / Madison 698-R) (Brown rot fungus).